Here is a 519-residue protein sequence, read N- to C-terminus: Halolysin (519 aa).

The segment at residues 1–27 (MAGTPNFDRRSFLRLAAAAGLTGMAGV) is a signal peptide (tat-type signal). Positions 28–116 (TSATPGRSPG…AEKNATHEAL (89 aa)) are excised as a propeptide. The Peptidase S8 domain maps to 127–400 (QYAPQQVNAD…SGRVDAANAV (274 aa)). Active-site charge relay system residues include Asp154, His193, and Ser347. Positions 386–425 (STKQGSGRVDAANAVTTDPGDGGGGGGGGSKETTYDGTLS) are disordered. The segment covering 405–415 (GDGGGGGGGGS) has biased composition (gly residues).

This sequence belongs to the peptidase S8 family. Predicted to be exported by the Tat system. The position of the signal peptide cleavage has not been experimentally proven.

Its subcellular location is the secreted. Its function is as follows. Probable secreted halophilic serine protease showing proteolytic activity toward the protease general substrate azocasein. The protein is Halolysin (hly) of Haloferax mediterranei (strain ATCC 33500 / DSM 1411 / JCM 8866 / NBRC 14739 / NCIMB 2177 / R-4) (Halobacterium mediterranei).